The primary structure comprises 173 residues: Small ribosomal subunit protein uS5 (173 aa).

Positions 17 to 80 (WQERVIQIRR…ADGKKQLIDV (64 aa)) constitute an S5 DRBM domain.

Belongs to the universal ribosomal protein uS5 family. Part of the 30S ribosomal subunit. Contacts proteins S4 and S8.

In terms of biological role, with S4 and S12 plays an important role in translational accuracy. Its function is as follows. Located at the back of the 30S subunit body where it stabilizes the conformation of the head with respect to the body. The chain is Small ribosomal subunit protein uS5 from Crocosphaera subtropica (strain ATCC 51142 / BH68) (Cyanothece sp. (strain ATCC 51142)).